Here is a 220-residue protein sequence, read N- to C-terminus: Zinc-finger homeodomain protein 2 (220 aa).

Residues Met-1–Glu-11 are compositionally biased toward acidic residues. The tract at residues Met-1–Ser-40 is disordered. The segment covering Ser-31–Ser-40 has biased composition (gly residues). The ZF-HD dimerization-type zinc-finger motif lies at Tyr-49–Glu-98. The disordered stretch occupies residues Glu-100–Phe-160. The homeobox; atypical DNA-binding region spans Thr-157–Pro-220.

Homo or heterodimer. Interacts with ZHD1, ZHD3, ZHD4, ZHD5, ZHD6, ZHD7, ZHD8, ZHD9, ZHD10 and ZHD11. As to expression, mostly expressed in flowers and, to a lower extent, in inflorescence, stems and leaves.

The protein resides in the nucleus. Functionally, essential protein. Putative transcription factor. In Arabidopsis thaliana (Mouse-ear cress), this protein is Zinc-finger homeodomain protein 2 (ZHD1).